The chain runs to 339 residues: Nicotinate-nucleotide--dimethylbenzimidazole phosphoribosyltransferase (339 aa).

Residue E306 is the Proton acceptor of the active site.

This sequence belongs to the CobT family.

The enzyme catalyses 5,6-dimethylbenzimidazole + nicotinate beta-D-ribonucleotide = alpha-ribazole 5'-phosphate + nicotinate + H(+). Its pathway is nucleoside biosynthesis; alpha-ribazole biosynthesis; alpha-ribazole from 5,6-dimethylbenzimidazole: step 1/2. Its function is as follows. Catalyzes the synthesis of alpha-ribazole-5'-phosphate from nicotinate mononucleotide (NAMN) and 5,6-dimethylbenzimidazole (DMB). The polypeptide is Nicotinate-nucleotide--dimethylbenzimidazole phosphoribosyltransferase (Brucella abortus (strain S19)).